A 705-amino-acid polypeptide reads, in one-letter code: Fatty acid oxidation complex subunit alpha (705 aa).

The interval 1-188 is enoyl-CoA hydratase; that stretch reads MGKTFNLTRR…KMGLVNDVVP (188 aa). Positions 308 to 705 are 3-hydroxyacyl-CoA dehydrogenase; the sequence is RKVKKAVILG…AMAAEKARFF (398 aa).

In the N-terminal section; belongs to the enoyl-CoA hydratase/isomerase family. The protein in the central section; belongs to the 3-hydroxyacyl-CoA dehydrogenase family. Heterotetramer of two alpha chains (FadJ) and two beta chains (FadI).

The protein localises to the cytoplasm. The catalysed reaction is a (3S)-3-hydroxyacyl-CoA = a (2E)-enoyl-CoA + H2O. The enzyme catalyses a 4-saturated-(3S)-3-hydroxyacyl-CoA = a (3E)-enoyl-CoA + H2O. It catalyses the reaction a (3S)-3-hydroxyacyl-CoA + NAD(+) = a 3-oxoacyl-CoA + NADH + H(+). It carries out the reaction (3S)-3-hydroxybutanoyl-CoA = (3R)-3-hydroxybutanoyl-CoA. The protein operates within lipid metabolism; fatty acid beta-oxidation. In terms of biological role, catalyzes the formation of a hydroxyacyl-CoA by addition of water on enoyl-CoA. Also exhibits 3-hydroxyacyl-CoA epimerase and 3-hydroxyacyl-CoA dehydrogenase activities. This is Fatty acid oxidation complex subunit alpha from Shewanella oneidensis (strain ATCC 700550 / JCM 31522 / CIP 106686 / LMG 19005 / NCIMB 14063 / MR-1).